We begin with the raw amino-acid sequence, 336 residues long: Phosphate acyltransferase (336 aa).

The protein belongs to the PlsX family. In terms of assembly, homodimer. Probably interacts with PlsY.

It localises to the cytoplasm. It carries out the reaction a fatty acyl-[ACP] + phosphate = an acyl phosphate + holo-[ACP]. The protein operates within lipid metabolism; phospholipid metabolism. Its function is as follows. Catalyzes the reversible formation of acyl-phosphate (acyl-PO(4)) from acyl-[acyl-carrier-protein] (acyl-ACP). This enzyme utilizes acyl-ACP as fatty acyl donor, but not acyl-CoA. The protein is Phosphate acyltransferase of Pseudomonas putida (strain ATCC 700007 / DSM 6899 / JCM 31910 / BCRC 17059 / LMG 24140 / F1).